Here is a 1196-residue protein sequence, read N- to C-terminus: NACHT, LRR and PYD domains-containing protein 1b allele 5 (1196 aa).

The segment at 1 to 22 is disordered; sequence MEESPPKQKSNTKVTQHEGQQD. The 310-residue stretch at 126-435 folds into the NACHT domain; sequence QLVIIEGAAG…EFFAAISCIL (310 aa). Residue 132–139 coordinates ATP; sequence GAAGIGKS. LRR repeat units lie at residues 627-647 and 684-704; these read NLEG…QSLC and SLTE…RMLC. Positions 789-922 are ZU5; that stretch reads FWGPTGPVAT…GYTVLKNPSF (134 aa). Residues 789-1072 form the FIIND domain; that stretch reads FWGPTGPVAT…KFDHLCDQEF (284 aa). The segment at 923–1072 is UPA; sequence SPMGVVLRII…KFDHLCDQEF (150 aa). In terms of domain architecture, CARD spans 1106–1189; the sequence is HFMDQHREQL…HLVMDLFEKS (84 aa).

The protein belongs to the NLRP family. Interacts with DPP9; leading to inhibit activation of the inflammasome. DPP9 acts via formation of a ternary complex, composed of a DPP9 homodimer, one full-length Nlrp1b protein, and one cleaved C-terminus of Nlrp1b (NACHT, LRR and PYD domains-containing protein 1b, C-terminus). Interacts with DPP8; leading to inhibit activation of the inflammasome, probably via formation of a ternary complex with DPP8. Interacts (via LRR repeats) with BCL2 and BCL2L1 (via the loop between motifs BH4 and BH3). Interacts with NOD2; this interaction may increase IL1B release. Interacts with EIF2AK2/PKR; this interaction requires EIF2AK2 activity, is accompanied by EIF2AK2 autophosphorylation and promotes inflammasome assembly in response to B.anthracis lethal toxin. Interacts with MEFV; this interaction targets Nlrp1b to degradation by autophagy, hence preventing excessive IL1B- and IL18-mediated inflammation. As to quaternary structure, interacts with the C-terminal part of Nlrp1b (NACHT, LRR and PYD domains-containing protein 1b, C-terminus) in absence of pathogens and other damage-associated signals. In terms of assembly, interacts with the N-terminal part of Nlrp1b (NACHT, LRR and PYD domains-containing protein 1b, N-terminus) in absence of pathogens and other damage-associated signals. Homomultimer; forms the Nlrp1b inflammasome polymeric complex, a filament composed of homopolymers of this form in response to pathogens and other damage-associated signals. The Nlrp1b inflammasome polymeric complex directly recruits pro-caspase-1 (proCASP1) independently of PYCARD/ASC. Interacts (via CARD domain) with CASP1 (via CARD domain); leading to CASP1 activation. In terms of processing, autocatalytically cleaved. Autocatalytic cleavage in FIIND region occurs constitutively, prior to activation signals, and is required for inflammasome activity (IL1B release), possibly by facilitating CASP1 binding. Both N- and C-terminal parts remain associated non-covalently. Ubiquitinated by the N-end rule pathway in response to pathogens and other damage-associated signals, leading to its degradation by the proteasome and subsequent release of the cleaved C-terminal part of the protein (NACHT, LRR and PYD domains-containing protein 1b, C-terminus), which polymerizes and forms the Nlrp1b inflammasome. Post-translationally, (Microbial infection) Cleavage by B.anthracis lethal toxin (LT) endopeptidase promotes ubiquitination and degradation of the N-terminal part, releasing the cleaved C-terminal part of the protein (NACHT, LRR and PYD domains-containing protein 1b, C-terminus), which polymerizes and forms the Nlrp1b inflammasome. As to expression, expressed in macrophages.

It localises to the cytoplasm. Its subcellular location is the cytosol. The protein resides in the inflammasome. Its activity is regulated as follows. Activated by cleavage by B.anthracis lethal toxin (LT) endopeptidase. Cleavage by LT promotes ubiquitination and degradation of the N-terminal part, releasing the cleaved C-terminal part of the protein (NACHT, LRR and PYD domains-containing protein 1b, C-terminus), which polymerizes and forms the Nlrp1b inflammasome. Nlrp1b inflammasome is inhibited by DPP8 and DPP9, which sequester the C-terminal fragment of Nlrp1b (NACHT, LRR and PYD domains-containing protein 1b, C-terminus) in a ternary complex, thereby preventing Nlrp1b oligomerization and activation. Nlrp1b inflammasome is activated by Val-boroPro (Talabostat, PT-100), an inhibitor of dipeptidyl peptidases DPP8 and DPP9. Val-boroPro relieves inhibition of DPP8 and/or DPP9 by promoting disruption of the ternary complex, releasing its C-terminal part from autoinhibition. Activated by metabolic inhibitors, such as 2-deoxy-D-glucose and sodium azide. Not activated by muramyl dipeptide, nor by full-length bacterial peptidoglycan. Acts as the sensor component of the Nlrp1b inflammasome, which mediates inflammasome activation in response to various pathogen-associated signals, leading to subsequent pyroptosis. Inflammasomes are supramolecular complexes that assemble in the cytosol in response to pathogens and other damage-associated signals and play critical roles in innate immunity and inflammation. Acts as a recognition receptor (PRR): recognizes specific pathogens and other damage-associated signals, such as B.anthracis lethal toxin (LT) or Val-boroPro inhibitor, and mediates the formation of the inflammasome polymeric complex. In response to pathogen-associated signals, the N-terminal part of Nlrp1b is degraded by the proteasome, releasing the cleaved C-terminal part of the protein (NACHT, LRR and PYD domains-containing protein 1b, C-terminus), which polymerizes to initiate the formation of the inflammasome complex: the inflammasome directly recruits pro-caspase-1 (proCASP1) independently of PYCARD/ASC and promotes caspase-1 (CASP1) activation, which subsequently cleaves and activates inflammatory cytokines IL1B and IL18 and gasdermin-D (GSDMD), leading to pyroptosis. In the absence of GSDMD expression, the Nlrp1b inflammasome is able to recruit and activate CASP8, leading to activation of gasdermin-E (GSDME). Activation of Nlrp1b inflammasome is also required for HMGB1 secretion; the active cytokines and HMGB1 stimulate inflammatory responses. Primary mediator of macrophage susceptibility to B.anthracis LT: in response to B.anthracis infection, macrophages and dendritic cells release IL1B and undergo pyroptosis. This early inflammatory response to the toxin increases resistance to infection by B.anthracis spores. Its function is as follows. Constitutes the precursor of the Nlrp1b inflammasome, which mediates autoproteolytic processing within the FIIND domain to generate the N-terminal and C-terminal parts, which are associated non-covalently in absence of pathogens and other damage-associated signals. In terms of biological role, regulatory part that prevents formation of the Nlrp1b inflammasome: in absence of pathogens and other damage-associated signals, interacts with the C-terminal part of Nlrp1b (NACHT, LRR and PYD domains-containing protein 1b, C-terminus), preventing activation of the Nlrp1b inflammasome. In response to pathogen-associated signals, this part is ubiquitinated by the N-end rule pathway and degraded by the proteasome, releasing the cleaved C-terminal part of the protein, which polymerizes and forms the Nlrp1b inflammasome. Functionally, constitutes the active part of the Nlrp1b inflammasome. In absence of pathogens and other damage-associated signals, interacts with the N-terminal part of Nlrp1b (NACHT, LRR and PYD domains-containing protein 1b, N-terminus), preventing activation of the Nlrp1b inflammasome. In response to pathogen-associated signals, the N-terminal part of Nlrp1b is degraded by the proteasome, releasing this form, which polymerizes to form the Nlrp1b inflammasome complex: the Nlrp1b inflammasome complex then directly recruits pro-caspase-1 (proCASP1) and promotes caspase-1 (CASP1) activation, leading to gasdermin-D (GSDMD) cleavage and subsequent pyroptosis. In Mus musculus (Mouse), this protein is NACHT, LRR and PYD domains-containing protein 1b allele 5 (Nlrp1b).